A 380-amino-acid chain; its full sequence is GATOR1 complex protein NPRL2 (380 aa).

Residues 1–133 (MGSGCRIECI…SKQKLVPIMT (133 aa)) form an interaction with PDPK1 region. Arg-78 contacts GDP. Arg-78 is modified (asymmetric dimethylarginine). Residues Lys-158 and Lys-357 each participate in a glycyl lysine isopeptide (Lys-Gly) (interchain with G-Cter in ubiquitin) cross-link.

Belongs to the NPR2 family. Within the GATOR complex, component of the GATOR1 subcomplex, made of DEPDC5, NPRL2 and NPRL3. GATOR1 mediates the strong interaction of the GATOR complex with small GTPases Rag (RagA/RRAGA, RagB/RRAGB, RagC/RRAGC and/or RagD/RRAGD) heterodimers. GATOR1 interacts with GPR155/LYCHOS; interaction takes place in presence of cholesterol and prevents interaction between GATOR1 and KICSTOR. Interacts with PDPK1. In terms of processing, in the presence of abundant amino acids, ubiquitinated at Lys-158 and Lys-357 via 'Lys-6'-linked ubiquitination by the WDR24 component of the GATOR2 complex, thereby inhibiting the GATOR1 complex and promoting mTORC1 activation. Post-translationally, asymmetric dimethylation at Arg-78 by PRMT1 inhibits the GTPase activator activity of the GATOR1 complex and consequently inducing timely mTORC1 activation under methionine-sufficient conditions. Most abundant in skeletal muscle, followed by brain, liver and pancreas, with lower amounts in lung, kidney, placenta and heart. Expressed in the frontal lobe cortex as well as in the temporal, parietal, and occipital lobes. Expressed in most lung cancer cell lines tested.

It localises to the lysosome membrane. Functionally, catalytic component of the GATOR1 complex, a multiprotein complex that functions as an inhibitor of the amino acid-sensing branch of the mTORC1 pathway. In response to amino acid depletion, the GATOR1 complex has GTPase activating protein (GAP) activity and strongly increases GTP hydrolysis by RagA/RRAGA (or RagB/RRAGB) within heterodimeric Rag complexes, thereby turning them into their inactive GDP-bound form, releasing mTORC1 from lysosomal surface and inhibiting mTORC1 signaling. In the presence of abundant amino acids, the GATOR1 complex is ubiquitinated and inhibited by GATOR2. Within the GATOR1 complex, NPRL2 constitutes the catalytic subunit that mediates the GTPase activator activity and under methionine-sufficient conditions, the GTPase activator activity is inhibited by PRMT1 through methylation and consequently inducing timely mTORC1 activation. Its function is as follows. Suppresses Src-dependent tyrosine phosphorylation and activation of PDPK1 and its downstream signaling. Down-regulates PDPK1 kinase activity by interfering with tyrosine phosphorylation at 'Tyr-9', 'Tyr-373' and 'Tyr-376' residues. May act as a tumor suppressor. Suppresses cell growth and enhances sensitivity to various anticancer drugs. The sequence is that of GATOR1 complex protein NPRL2 from Homo sapiens (Human).